Reading from the N-terminus, the 172-residue chain is MAYYTVGTIVNTHGIKGEVRVVATTDFPESRFAVGSTLYAFQKDQATPVTLTVASVRQHKNFYLLSFEGKPSINDVEIFKQSTLKVTDNELESNDLRPGEYYYHQIVGLDAVTVDGENLGKIKEILSPGANDVWVVARPGKSDLLLPKIDQVIKRVDLDQGKVIVELMEGLD.

The PRC barrel domain maps to 98 to 171 (PGEYYYHQIV…KVIVELMEGL (74 aa)).

The protein belongs to the RimM family. In terms of assembly, binds ribosomal protein uS19.

It is found in the cytoplasm. Functionally, an accessory protein needed during the final step in the assembly of 30S ribosomal subunit, possibly for assembly of the head region. Essential for efficient processing of 16S rRNA. May be needed both before and after RbfA during the maturation of 16S rRNA. It has affinity for free ribosomal 30S subunits but not for 70S ribosomes. This Levilactobacillus brevis (strain ATCC 367 / BCRC 12310 / CIP 105137 / JCM 1170 / LMG 11437 / NCIMB 947 / NCTC 947) (Lactobacillus brevis) protein is Ribosome maturation factor RimM.